Consider the following 316-residue polypeptide: Apolipoprotein E (316 aa).

Residues 1–18 (MKALWAVLVVTLLAGCLA) form the signal peptide. 8 consecutive repeat copies span residues 76–97 (VLME…EQLG), 98–119 (PMAE…SRLG), 120–141 (ADME…TMLG), 142–163 (QSTE…KRLM), 164–185 (RDAE…EGAE), 186–207 (RGVG…QRTA), 208–229 (NLGA…ARIR), and 230–251 (GRLE…EQME). Residues 76 to 251 (VLMEDTMTEL…RLEEVREQME (176 aa)) form an 8 X 22 AA approximate tandem repeats region. A Methionine sulfoxide modification is found at methionine 139. Phosphoserine is present on serine 143. The LDL and other lipoprotein receptors binding stretch occupies residues 154-164 (HLRKLRKRLMR). 158–161 (LRKR) contributes to the heparin binding site. The interval 206 to 286 (TANLGAGAGK…GWFEPLVEDM (81 aa)) is lipid-binding and lipoprotein association. 225-232 (GARIRGRL) is a binding site for heparin. Residues 262 to 316 (QQMRLQAEIFQARLKGWFEPLVEDMQRQWANLVEKIQASVAANPIPPSSVPQESQ) are homooligomerization. Residues 274–286 (RLKGWFEPLVEDM) form a specificity for association with VLDL region.

It belongs to the apolipoprotein A1/A4/E family. As to quaternary structure, homotetramer. May interact with ABCA1; functionally associated with ABCA1 in the biogenesis of HDLs. May interact with APP/A4 amyloid-beta peptide; the interaction is extremely stable in vitro but its physiological significance is unclear. May interact with MAPT. May interact with MAP2. In the cerebrospinal fluid, interacts with secreted SORL1. Interacts with PMEL; this allows the loading of PMEL luminal fragment on ILVs to induce fibril nucleation. Post-translationally, APOE exists as multiple glycosylated and sialylated glycoforms within cells and in plasma. The extent of glycosylation and sialylation are tissue and context specific. In terms of processing, glycated in plasma VLDL. Phosphorylated by FAM20C in the extracellular medium.

The protein resides in the secreted. The protein localises to the extracellular space. It localises to the extracellular matrix. It is found in the extracellular vesicle. Its subcellular location is the endosome. The protein resides in the multivesicular body. Functionally, APOE is an apolipoprotein, a protein associating with lipid particles, that mainly functions in lipoprotein-mediated lipid transport between organs via the plasma and interstitial fluids. APOE is a core component of plasma lipoproteins and is involved in their production, conversion and clearance. Apolipoproteins are amphipathic molecules that interact both with lipids of the lipoprotein particle core and the aqueous environment of the plasma. As such, APOE associates with chylomicrons, chylomicron remnants, very low density lipoproteins (VLDL) and intermediate density lipoproteins (IDL) but shows a preferential binding to high-density lipoproteins (HDL). It also binds a wide range of cellular receptors including the LDL receptor/LDLR, the LDL receptor-related proteins LRP1, LRP2 and LRP8 and the very low-density lipoprotein receptor/VLDLR that mediate the cellular uptake of the APOE-containing lipoprotein particles. Finally, APOE also has a heparin-binding activity and binds heparan-sulfate proteoglycans on the surface of cells, a property that supports the capture and the receptor-mediated uptake of APOE-containing lipoproteins by cells. A main function of APOE is to mediate lipoprotein clearance through the uptake of chylomicrons, VLDLs, and HDLs by hepatocytes. APOE is also involved in the biosynthesis by the liver of VLDLs as well as their uptake by peripheral tissues ensuring the delivery of triglycerides and energy storage in muscle, heart and adipose tissues. By participating in the lipoprotein-mediated distribution of lipids among tissues, APOE plays a critical role in plasma and tissues lipid homeostasis. APOE is also involved in two steps of reverse cholesterol transport, the HDLs-mediated transport of cholesterol from peripheral tissues to the liver, and thereby plays an important role in cholesterol homeostasis. First, it is functionally associated with ABCA1 in the biogenesis of HDLs in tissues. Second, it is enriched in circulating HDLs and mediates their uptake by hepatocytes. APOE also plays an important role in lipid transport in the central nervous system, regulating neuron survival and sprouting. The sequence is that of Apolipoprotein E (Apoe) from Onychomys torridus (Southern grasshopper mouse).